Consider the following 115-residue polypeptide: UPF0738 protein SAB0871 (115 aa).

This sequence belongs to the UPF0738 family.

The chain is UPF0738 protein SAB0871 from Staphylococcus aureus (strain bovine RF122 / ET3-1).